We begin with the raw amino-acid sequence, 160 residues long: Transcriptional regulator MraZ (160 aa).

SpoVT-AbrB domains lie at 5–51 and 80–123; these read TFEK…GKAL and MAKL…EREA.

This sequence belongs to the MraZ family. Forms oligomers.

It is found in the cytoplasm. The protein resides in the nucleoid. This is Transcriptional regulator MraZ from Phenylobacterium zucineum (strain HLK1).